Consider the following 953-residue polypeptide: Eukaryotic translation initiation factor 3 subunit A (953 aa).

The PCI domain occupies 323-504 (LQKMASHVLL…KSISFGLDLH (182 aa)). Coiled-coil stretches lie at residues 593-642 (QERE…KRQA), 670-704 (MNADDIIAKQVEQLDKEKRELQTKLKTQEKKVDYF), and 732-877 (ENQE…LEER). The disordered stretch occupies residues 603-623 (IKKQKVENQEAEQKRLDEERR). Disordered stretches follow at residues 810-861 (ERKK…EIDR) and 893-953 (GWGD…ITMS). Composition is skewed to basic and acidic residues over residues 812–861 (KKIE…EIDR), 895–919 (GDHEDGGDRWRDERGGDRGPDRGGD), and 928–953 (WQREEPDRGGDRWRGGDRRDGMITMS).

Belongs to the eIF-3 subunit A family. As to quaternary structure, component of the eukaryotic translation initiation factor 3 (eIF-3) complex.

Its subcellular location is the cytoplasm. In terms of biological role, RNA-binding component of the eukaryotic translation initiation factor 3 (eIF-3) complex, which is involved in protein synthesis of a specialized repertoire of mRNAs and, together with other initiation factors, stimulates binding of mRNA and methionyl-tRNAi to the 40S ribosome. The eIF-3 complex specifically targets and initiates translation of a subset of mRNAs involved in cell proliferation. The chain is Eukaryotic translation initiation factor 3 subunit A from Nematostella vectensis (Starlet sea anemone).